A 198-amino-acid polypeptide reads, in one-letter code: Remorin (198 aa).

The span at 1-11 (MAELEAKKVEI) shows a compositional bias: basic and acidic residues. The segment at 1–24 (MAELEAKKVEIVDPAPPAPGPVEA) is disordered. Positions 97-184 (EESEKSKAEN…LKAEELAAKY (88 aa)) form a coiled coil.

This sequence belongs to the remorin family. In terms of processing, the N-terminus is blocked. Phosphorylated.

The protein resides in the cell membrane. Binds to both simple and complex galacturonides. May be involved in cell-to-cell signaling and molecular transport. The sequence is that of Remorin from Solanum tuberosum (Potato).